Reading from the N-terminus, the 308-residue chain is UPF0282 protein SSO3251 (308 aa).

Belongs to the UPF0282 family.

This Saccharolobus solfataricus (strain ATCC 35092 / DSM 1617 / JCM 11322 / P2) (Sulfolobus solfataricus) protein is UPF0282 protein SSO3251.